Consider the following 315-residue polypeptide: Calumenin (315 aa).

The first 19 residues, 1-19 (MDLRQFLMCLSLCTAFALS), serve as a signal peptide directing secretion. Tyr-47 carries the phosphotyrosine modification. Thr-65 is modified (phosphothreonine). EF-hand domains follow at residues 68-103 (ESKE…AQKK), 104-139 (YIYD…TYLD), 151-186 (PIMV…EEYD), 188-223 (MKDI…HDGN), 229-264 (WVKT…SDYD), and 265-300 (HAEA…FVGS). Ser-69 carries the post-translational modification Phosphoserine. Ca(2+) is bound by residues Asp-81, Asp-83, Asp-85, Glu-92, Asp-117, Asn-119, Asp-121, and Glu-128. The N-linked (GlcNAc...) asparagine glycan is linked to Asn-131. Residues Asp-164, Asp-166, Asp-168, Glu-175, Asp-201, Asn-203, Asp-205, Glu-212, Asp-242, Asn-244, Asp-246, Lys-248, and Glu-253 each coordinate Ca(2+). Thr-254 carries the post-translational modification Phosphothreonine. Phosphoserine occurs at positions 261 and 277. Positions 278, 280, 282, 284, and 289 each coordinate Ca(2+). The Prevents secretion from ER motif lies at 312–315 (HDEF).

It belongs to the CREC family. In terms of assembly, binds crotoxin. Interacts with GGCX.

The protein localises to the endoplasmic reticulum membrane. Its subcellular location is the golgi apparatus. The protein resides in the secreted. It is found in the melanosome. It localises to the sarcoplasmic reticulum lumen. In terms of biological role, involved in regulation of vitamin K-dependent carboxylation of multiple N-terminal glutamate residues. Seems to inhibit gamma-carboxylase GGCX. Binds 7 calcium ions with a low affinity. This chain is Calumenin (Calu), found in Rattus norvegicus (Rat).